The sequence spans 98 residues: NADH-ubiquinone oxidoreductase chain 4L (98 aa).

Transmembrane regions (helical) follow at residues 1-21 (MTAI…GVLV), 29-49 (TLLC…LLIT), and 59-79 (LPLT…ALLV).

This sequence belongs to the complex I subunit 4L family. As to quaternary structure, core subunit of respiratory chain NADH dehydrogenase (Complex I) which is composed of 45 different subunits.

It is found in the mitochondrion inner membrane. The enzyme catalyses a ubiquinone + NADH + 5 H(+)(in) = a ubiquinol + NAD(+) + 4 H(+)(out). Its function is as follows. Core subunit of the mitochondrial membrane respiratory chain NADH dehydrogenase (Complex I) which catalyzes electron transfer from NADH through the respiratory chain, using ubiquinone as an electron acceptor. Part of the enzyme membrane arm which is embedded in the lipid bilayer and involved in proton translocation. This Notoryctes typhlops (Southern marsupial mole) protein is NADH-ubiquinone oxidoreductase chain 4L (MT-ND4L).